The following is a 445-amino-acid chain: Argininosuccinate synthase (445 aa).

ATP-binding positions include 17 to 25 (AFSGGLDTS) and A43. Y99 lines the L-citrulline pocket. Residues G129 and T131 each contribute to the ATP site. L-aspartate is bound by residues T131, N135, and D136. N135 lines the L-citrulline pocket. D136 contacts ATP. The L-citrulline site is built by R139 and S192. D194 contributes to the ATP binding site. Residues T201, E203, and E280 each coordinate L-citrulline.

The protein belongs to the argininosuccinate synthase family. Type 2 subfamily. As to quaternary structure, homotetramer.

It localises to the cytoplasm. It catalyses the reaction L-citrulline + L-aspartate + ATP = 2-(N(omega)-L-arginino)succinate + AMP + diphosphate + H(+). The protein operates within amino-acid biosynthesis; L-arginine biosynthesis; L-arginine from L-ornithine and carbamoyl phosphate: step 2/3. This is Argininosuccinate synthase from Bradyrhizobium sp. (strain BTAi1 / ATCC BAA-1182).